The following is a 202-amino-acid chain: Glycerol-3-phosphate acyltransferase (202 aa).

4 helical membrane passes run 2 to 22, 85 to 105, 119 to 139, and 158 to 178; these read ANLL…AVVV, LAMV…HRFA, AINP…AFFF, and VLME…ILLI.

Belongs to the PlsY family. Probably interacts with PlsX.

It is found in the cell inner membrane. It catalyses the reaction an acyl phosphate + sn-glycerol 3-phosphate = a 1-acyl-sn-glycero-3-phosphate + phosphate. Its pathway is lipid metabolism; phospholipid metabolism. Its function is as follows. Catalyzes the transfer of an acyl group from acyl-phosphate (acyl-PO(4)) to glycerol-3-phosphate (G3P) to form lysophosphatidic acid (LPA). This enzyme utilizes acyl-phosphate as fatty acyl donor, but not acyl-CoA or acyl-ACP. This is Glycerol-3-phosphate acyltransferase from Cupriavidus pinatubonensis (strain JMP 134 / LMG 1197) (Cupriavidus necator (strain JMP 134)).